The chain runs to 541 residues: T-complex protein 1 subunit epsilon (541 aa).

An N-acetylalanine modification is found at Ala-2. Lys-20 is covalently cross-linked (Glycyl lysine isopeptide (Lys-Gly) (interchain with G-Cter in SUMO2)). Ser-26 carries the phosphoserine modification. Gly-53 is an ADP binding site. Gly-53 is a binding site for ATP. Residue Asp-104 coordinates Mg(2+). Residues Gly-105, Thr-106, Thr-107, and Ser-175 each coordinate ADP. ATP is bound by residues Thr-106 and Thr-107. Glycyl lysine isopeptide (Lys-Gly) (interchain with G-Cter in SUMO2) cross-links involve residues Lys-210, Lys-214, Lys-265, Lys-275, and Lys-279. Residue Ser-346 is modified to Phosphoserine. Residue Lys-392 forms a Glycyl lysine isopeptide (Lys-Gly) (interchain with G-Cter in SUMO2) linkage. ADP contacts are provided by Gly-422, Asp-492, Glu-508, and Lys-513. Gly-422 contributes to the ATP binding site. A Phosphoserine modification is found at Ser-539.

This sequence belongs to the TCP-1 chaperonin family. Component of the chaperonin-containing T-complex (TRiC), a hexadecamer composed of two identical back-to-back stacked rings enclosing a protein folding chamber. Each ring is made up of eight different subunits: TCP1/CCT1, CCT2, CCT3, CCT4, CCT5, CCT6A/CCT6, CCT7, CCT8. Interacts with PACRG. Interacts with DNAAF4. Interacts with DLEC1. Interacts with SPMAP2. In terms of processing, ubiquitinated by the DCX(DCAF12) complex specifically recognizes the diglutamate (Glu-Glu) at the C-terminus, leading to its degradation.

The protein localises to the cytoplasm. It is found in the cytoskeleton. It localises to the microtubule organizing center. Its subcellular location is the centrosome. The enzyme catalyses ATP + H2O = ADP + phosphate + H(+). Component of the chaperonin-containing T-complex (TRiC), a molecular chaperone complex that assists the folding of actin, tubulin and other proteins upon ATP hydrolysis. The TRiC complex mediates the folding of WRAP53/TCAB1, thereby regulating telomere maintenance. As part of the TRiC complex may play a role in the assembly of BBSome, a complex involved in ciliogenesis regulating transports vesicles to the cilia. The chain is T-complex protein 1 subunit epsilon (CCT5) from Homo sapiens (Human).